The chain runs to 303 residues: Probable 5-dehydro-4-deoxyglucarate dehydratase (303 aa).

It belongs to the DapA family.

The catalysed reaction is 5-dehydro-4-deoxy-D-glucarate + H(+) = 2,5-dioxopentanoate + CO2 + H2O. Its pathway is carbohydrate acid metabolism; D-glucarate degradation; 2,5-dioxopentanoate from D-glucarate: step 2/2. The polypeptide is Probable 5-dehydro-4-deoxyglucarate dehydratase (Azotobacter vinelandii (strain DJ / ATCC BAA-1303)).